A 225-amino-acid chain; its full sequence is Biosynthetic peptidoglycan transglycosylase (225 aa).

A helical transmembrane segment spans residues 9–29 (LLIFIGAILLIQLWIFSSLVW).

Belongs to the glycosyltransferase 51 family.

The protein localises to the cell inner membrane. It catalyses the reaction [GlcNAc-(1-&gt;4)-Mur2Ac(oyl-L-Ala-gamma-D-Glu-L-Lys-D-Ala-D-Ala)](n)-di-trans,octa-cis-undecaprenyl diphosphate + beta-D-GlcNAc-(1-&gt;4)-Mur2Ac(oyl-L-Ala-gamma-D-Glu-L-Lys-D-Ala-D-Ala)-di-trans,octa-cis-undecaprenyl diphosphate = [GlcNAc-(1-&gt;4)-Mur2Ac(oyl-L-Ala-gamma-D-Glu-L-Lys-D-Ala-D-Ala)](n+1)-di-trans,octa-cis-undecaprenyl diphosphate + di-trans,octa-cis-undecaprenyl diphosphate + H(+). It functions in the pathway cell wall biogenesis; peptidoglycan biosynthesis. Peptidoglycan polymerase that catalyzes glycan chain elongation from lipid-linked precursors. This is Biosynthetic peptidoglycan transglycosylase from Acinetobacter baumannii (strain SDF).